The primary structure comprises 733 residues: Submandibular gland protein C (733 aa).

An N-terminal signal peptide occupies residues 1-20; that stretch reads MKLILLYLAVVLCFVGKARS. The segment at 48–91 is disordered; it reads KSSGGSKDYNLSDGGKSNSRKNLSPATGGSATQQSNLDDSHAPN. Residue Asn57 is glycosylated (N-linked (GlcNAc...) asparagine). The segment covering 62–84 has biased composition (polar residues); sequence GKSNSRKNLSPATGGSATQQSNL. 2 N-linked (GlcNAc...) asparagine glycosylation sites follow: Asn141 and Asn187. Disordered regions lie at residues 172 to 204, 249 to 330, 369 to 450, and 496 to 733; these read GQQA…ADKP, LTED…NSSN, and SVTE…PSVA. The span at 186–199 shows a compositional bias: polar residues; sequence ENSSLSTGSATSNK. The segment covering 256-270 has biased composition (low complexity); it reads TSTSASVSGDSSTSS. Polar residues predominate over residues 300 to 318; it reads GSKQNVEDSTLSTGSATSN. A glycan (N-linked (GlcNAc...) asparagine) is linked at Asn327. Residues 376 to 390 are compositionally biased toward low complexity; the sequence is TSTSASVSGDSSTSS. Positions 420–438 are enriched in polar residues; that stretch reads GSKQNVEDSTLSTGSATSN. 3 N-linked (GlcNAc...) asparagine glycosylation sites follow: Asn447, Asn514, and Asn528. Polar residues-rich tracts occupy residues 496–516 and 525–535; these read SVTE…NNLS and NPTNGSSSASS. A compositionally biased stretch (basic and acidic residues) spans 538–552; sequence KPYEEGMRKLLKFLE. Low complexity-rich tracts occupy residues 563–574 and 609–619; these read SVSGMSSESSRS and SSNSSTGSATS. A glycan (N-linked (GlcNAc...) asparagine) is linked at Asn611. A compositionally biased stretch (gly residues) spans 654 to 665; it reads GFNGPEGVGENN. The span at 677-701 shows a compositional bias: low complexity; the sequence is GSKSDSGSHNLSSGSGSRSNVSTGG. N-linked (GlcNAc...) asparagine glycans are attached at residues Asn686 and Asn696. Polar residues predominate over residues 722 to 733; sequence TGKTQSGSPSVA.

In terms of processing, N-glycosylated. In terms of tissue distribution, detected in terminal tubule cells of the submandibular gland (at protein level). Expressed in submandibular salivary glands of 3-day-old males but not adults. Expression in adult submandibular glands is restricted to females. Isoform 5 is expressed in both 3-day-old and adult sublingual glands.

It localises to the secreted. In Mus musculus (Mouse), this protein is Submandibular gland protein C (Muc19).